The primary structure comprises 644 residues: Biosynthetic arginine decarboxylase (644 aa).

N6-(pyridoxal phosphate)lysine is present on K105. 287–297 (LDVGGGLGIDY) lines the substrate pocket.

Belongs to the Orn/Lys/Arg decarboxylase class-II family. SpeA subfamily. Mg(2+) serves as cofactor. Requires pyridoxal 5'-phosphate as cofactor.

It catalyses the reaction L-arginine + H(+) = agmatine + CO2. In terms of biological role, catalyzes the biosynthesis of agmatine from arginine. The polypeptide is Biosynthetic arginine decarboxylase (Parasynechococcus marenigrum (strain WH8102)).